We begin with the raw amino-acid sequence, 120 residues long: Aspartate 1-decarboxylase (120 aa).

The Schiff-base intermediate with substrate; via pyruvic acid role is filled by Ser25. Ser25 carries the pyruvic acid (Ser) modification. A substrate-binding site is contributed by Thr57. Residue Tyr58 is the Proton donor of the active site. 73 to 75 (GAA) is a binding site for substrate.

It belongs to the PanD family. As to quaternary structure, heterooctamer of four alpha and four beta subunits. Pyruvate serves as cofactor. Post-translationally, is synthesized initially as an inactive proenzyme, which is activated by self-cleavage at a specific serine bond to produce a beta-subunit with a hydroxyl group at its C-terminus and an alpha-subunit with a pyruvoyl group at its N-terminus.

Its subcellular location is the cytoplasm. The enzyme catalyses L-aspartate + H(+) = beta-alanine + CO2. It functions in the pathway cofactor biosynthesis; (R)-pantothenate biosynthesis; beta-alanine from L-aspartate: step 1/1. Its function is as follows. Catalyzes the pyruvoyl-dependent decarboxylation of aspartate to produce beta-alanine. This Methylibium petroleiphilum (strain ATCC BAA-1232 / LMG 22953 / PM1) protein is Aspartate 1-decarboxylase.